The primary structure comprises 546 residues: Chaperonin GroEL (546 aa).

ATP is bound by residues 29–32 (TLGP), lysine 50, 86–90 (DGTTT), glycine 414, 477–479 (NAL), and aspartate 493.

Belongs to the chaperonin (HSP60) family. Forms a cylinder of 14 subunits composed of two heptameric rings stacked back-to-back. Interacts with the co-chaperonin GroES.

Its subcellular location is the cytoplasm. The catalysed reaction is ATP + H2O + a folded polypeptide = ADP + phosphate + an unfolded polypeptide.. Together with its co-chaperonin GroES, plays an essential role in assisting protein folding. The GroEL-GroES system forms a nano-cage that allows encapsulation of the non-native substrate proteins and provides a physical environment optimized to promote and accelerate protein folding. The protein is Chaperonin GroEL of Leptospira interrogans serogroup Icterohaemorrhagiae serovar copenhageni (strain Fiocruz L1-130).